A 725-amino-acid polypeptide reads, in one-letter code: MRFSKLSLAIATTLVTANALAQSVELDSINVIATRDPSRFAYTPEKQSKDSLLSKQATSVAAALEDIPNVDIRGGSRSIAQKPNIRGLSDNRVVQVIDGVRQNFDLAHRGSYFLPMSLIQEIEVIKGPSSSLWGSGALGGVVAMRTPNALDLLKNNDKFGVKIRQGYQTANNLSERDVSVFAANDKFDVLISGFYNNADNLRTGKGNKLNNTAYKQFGGLAKFGWQINDANRVELSHRETRFKQTAPSNNEVENELTNEQITDQIREFHKPNNGSPPKAKPSQEEFYSGVKTRFGSVSYLTDQQIPDQSTVFNYYLTPDNPYLNTHIALYNNKTIEKEQRKVSGVKDQTKLTTRGINLRNSSELSHISFVYGVDYMRDKIRTERGTNNKDAQFRADPYNANSNTTGVYLIAHIPLFGEKLLLSPSVRYDHYDTSSKTVKYKDNHLSPATKLTWIVTNWLDFTAKYNEAFRAPSMQERFVSGSHFGTSILGRNEINKFVANPNLRPETAKNKEITANLHFDSLFKQGDKFKIEATYFRNDVKDFINLKIFNDAKTNTNASASAGAGAGANPNGALLPTKSQYQNITNARLSGIELQAQYQTERLTLFTNYGSTKGKDKDSGEALSNIAASKIGVGVNYALVKDKFTVGATVTHYAAQRRVPKDHSVTYPSYILTDLRATYAPLKGEWKNLRLDFALENLFDRKYQPAFSLMEGTGRNAKISAVYSF.

The N-terminal stretch at 1–21 (MRFSKLSLAIATTLVTANALA) is a signal peptide. The TBDR plug domain occupies 36–147 (DPSRFAYTPE…LGGVVAMRTP (112 aa)). The TBDR beta-barrel domain maps to 158–725 (KFGVKIRQGY…NAKISAVYSF (568 aa)). Positions 708 to 725 (SLMEGTGRNAKISAVYSF) match the TonB C-terminal box motif.

It belongs to the TonB-dependent receptor family.

The protein resides in the cell outer membrane. In terms of biological role, required for utilization of free heme at low concentrations. The sequence is that of Heme/hemopexin utilization protein C (hxuC) from Haemophilus influenzae.